We begin with the raw amino-acid sequence, 726 residues long: DNA-directed RNA polymerase subunit beta N-terminal section (726 aa).

It belongs to the RNA polymerase beta chain family. In terms of assembly, in plastids the minimal PEP RNA polymerase catalytic core is composed of four subunits: alpha, beta, beta', and beta''. When a (nuclear-encoded) sigma factor is associated with the core the holoenzyme is formed, which can initiate transcription.

The protein localises to the plastid. Its subcellular location is the chloroplast. The enzyme catalyses RNA(n) + a ribonucleoside 5'-triphosphate = RNA(n+1) + diphosphate. DNA-dependent RNA polymerase catalyzes the transcription of DNA into RNA using the four ribonucleoside triphosphates as substrates. The protein is DNA-directed RNA polymerase subunit beta N-terminal section (rpoB1) of Tetradesmus obliquus (Green alga).